The following is a 278-amino-acid chain: Undecaprenyl-diphosphatase 1 (278 aa).

6 consecutive transmembrane segments (helical) span residues 45–65 (AVIG…LVYF), 95–115 (WWVI…KPLI), 119–139 (LASL…MWWA), 191–211 (VAAT…AGLY), 225–245 (PLAV…AWLL), and 256–276 (FVVY…TGVL).

This sequence belongs to the UppP family.

The protein localises to the cell membrane. The enzyme catalyses di-trans,octa-cis-undecaprenyl diphosphate + H2O = di-trans,octa-cis-undecaprenyl phosphate + phosphate + H(+). Its function is as follows. Catalyzes the dephosphorylation of undecaprenyl diphosphate (UPP). Confers resistance to bacitracin. The sequence is that of Undecaprenyl-diphosphatase 1 from Streptomyces coelicolor (strain ATCC BAA-471 / A3(2) / M145).